The sequence spans 246 residues: Adenosylcobinamide-GDP ribazoletransferase (246 aa).

Helical transmembrane passes span 30–50, 51–71, 105–125, 131–151, 167–189, 193–210, and 226–246; these read VNWYPAVGLVIGLLLWGVHQA, GLVLFSPWIAAILTLIAWVYV, VGAMGVLAAIMLLLIKAGAVA, GWGSFLIVAPVAARTHVLLSI, ISSGLSVSSIIVSYIIVFAAGWY, LQVMTAIFLSLLFALWFS, and GAVIESSEAVVLLVLVGSWWL.

This sequence belongs to the CobS family. Requires Mg(2+) as cofactor.

The protein localises to the cell membrane. The enzyme catalyses alpha-ribazole + adenosylcob(III)inamide-GDP = adenosylcob(III)alamin + GMP + H(+). The catalysed reaction is alpha-ribazole 5'-phosphate + adenosylcob(III)inamide-GDP = adenosylcob(III)alamin 5'-phosphate + GMP + H(+). It participates in cofactor biosynthesis; adenosylcobalamin biosynthesis; adenosylcobalamin from cob(II)yrinate a,c-diamide: step 7/7. Functionally, joins adenosylcobinamide-GDP and alpha-ribazole to generate adenosylcobalamin (Ado-cobalamin). Also synthesizes adenosylcobalamin 5'-phosphate from adenosylcobinamide-GDP and alpha-ribazole 5'-phosphate. This Brevibacillus brevis (strain 47 / JCM 6285 / NBRC 100599) protein is Adenosylcobinamide-GDP ribazoletransferase.